Reading from the N-terminus, the 1505-residue chain is ABC transporter C family member 13 (1505 aa).

12 consecutive transmembrane segments (helical) span residues 11 to 31 (EAAA…LLLL), 54 to 68 (AVDG…VGAW), 71 to 91 (AALA…SYEV), 102 to 122 (ALLL…LAMQ), 131 to 151 (FPVL…GIAY), 171 to 191 (MVAN…GVMG), 313 to 333 (AFAA…SYFV), 336 to 356 (LSGK…FFVA), 367 to 387 (WYLG…AMVY), 421 to 441 (AWYF…LAIL), 447 to 467 (IAMV…VPVA), and 534 to 554 (FVFW…CILL). The ABC transmembrane type-1 1 domain occupies 314-589 (FAAVNTIVSY…FPDLISMIAQ (276 aa)). An ABC transporter 1 domain is found at 623–846 (ININDATFSW…GTDFNALVCA (224 aa)). 658 to 665 (GVIGSGKS) serves as a coordination point for ATP. Over residues 881–897 (DNLKNKVSNNEKPSSTR) the composition is skewed to polar residues. Residues 881–919 (DNLKNKVSNNEKPSSTRGIKEKKKKPEERKKKRSVQEEE) are disordered. Residues 904–919 (KKPEERKKKRSVQEEE) show a composition bias toward basic and acidic residues. Transmembrane regions (helical) follow at residues 940–960 (GTLI…QIAS), 980–1000 (SVVL…FVFV), 1055–1077 (IAFR…AVMS), 1081–1103 (WQVL…YYIA), 1149–1169 (LLDC…WLCL), and 1174–1194 (LSTF…PGTI). Positions 945–1215 (LIILAQTMFQ…GLNLNARMSR (271 aa)) constitute an ABC transmembrane type-1 2 domain. Positions 1262-1496 (IELVDLKVRY…KSSMFMQLVS (235 aa)) constitute an ABC transporter 2 domain. 1296-1303 (GRTGSGKS) is an ATP binding site.

It belongs to the ABC transporter superfamily. ABCC family. Conjugate transporter (TC 3.A.1.208) subfamily.

The protein localises to the membrane. Functionally, ABC transporter that may affect phytic acid transport and compartmentalization. May function directly or indirectly in removing phytic acid from the cytosol or in vesicle trafficking. Required for phytic acid accumulation in developing seeds. Phytic acid is the primary storage form of phosphorus in cereal grains and other plant seeds. The polypeptide is ABC transporter C family member 13 (Oryza sativa subsp. indica (Rice)).